A 248-amino-acid polypeptide reads, in one-letter code: AA9 family lytic polysaccharide monooxygenase G (248 aa).

Residues 1–21 (MLPNAAGLLVAGVVSLSGVAA) form the signal peptide. H22 contacts Cu(2+). A glycan (N-linked (GlcNAc...) asparagine) is linked at N58. A disulfide bond links C77 and C195. H107 is a binding site for Cu(2+). Residue Q190 coordinates O2. Residue Y192 coordinates Cu(2+). Residue N203 is glycosylated (N-linked (GlcNAc...) asparagine).

Belongs to the polysaccharide monooxygenase AA9 family. It depends on Cu(2+) as a cofactor.

Its subcellular location is the secreted. It catalyses the reaction [(1-&gt;4)-beta-D-glucosyl]n+m + reduced acceptor + O2 = 4-dehydro-beta-D-glucosyl-[(1-&gt;4)-beta-D-glucosyl]n-1 + [(1-&gt;4)-beta-D-glucosyl]m + acceptor + H2O.. Functionally, lytic polysaccharide monooxygenase (LPMO) that depolymerizes crystalline and amorphous polysaccharides via the oxidation of scissile alpha- or beta-(1-4)-glycosidic bonds, yielding C1 or C4 oxidation products. Catalysis by LPMOs requires the reduction of the active-site copper from Cu(II) to Cu(I) by a reducing agent and H(2)O(2) or O(2) as a cosubstrate. The polypeptide is AA9 family lytic polysaccharide monooxygenase G (Malbranchea cinnamomea (Thermophilic fungus)).